Consider the following 134-residue polypeptide: Profilin-5 (134 aa).

C13 and C118 are oxidised to a cystine. An Involved in PIP2 interaction motif is present at residues 84-100; that stretch reads AVIRGKKGSGGITIKKT. Residue T114 is modified to Phosphothreonine.

Belongs to the profilin family. In terms of assembly, occurs in many kinds of cells as a complex with monomeric actin in a 1:1 ratio. Post-translationally, phosphorylated by MAP kinases.

Its subcellular location is the cytoplasm. It localises to the cytoskeleton. Its function is as follows. Binds to actin and affects the structure of the cytoskeleton. At high concentrations, profilin prevents the polymerization of actin, whereas it enhances it at low concentrations. The polypeptide is Profilin-5 (Olea europaea (Common olive)).